The following is a 285-amino-acid chain: Nucleotide-binding protein NTHI1314 (285 aa).

Residue Gly8–Ser15 participates in ATP binding. Asp56–Asn59 is a binding site for GTP.

It belongs to the RapZ-like family.

Its function is as follows. Displays ATPase and GTPase activities. The polypeptide is Nucleotide-binding protein NTHI1314 (Haemophilus influenzae (strain 86-028NP)).